A 72-amino-acid polypeptide reads, in one-letter code: Exodeoxyribonuclease 7 small subunit (72 aa).

The protein belongs to the XseB family. Heterooligomer composed of large and small subunits.

It is found in the cytoplasm. The enzyme catalyses Exonucleolytic cleavage in either 5'- to 3'- or 3'- to 5'-direction to yield nucleoside 5'-phosphates.. Bidirectionally degrades single-stranded DNA into large acid-insoluble oligonucleotides, which are then degraded further into small acid-soluble oligonucleotides. This chain is Exodeoxyribonuclease 7 small subunit, found in Clostridium kluyveri (strain NBRC 12016).